Here is a 380-residue protein sequence, read N- to C-terminus: MLQTLHDYFWWERLWLPVNLTWADLEDRDGRVYAKASDLYITLPLALLFLIIRYFFELYVATPLAALLNVKEKTRLRAPPNPTLEHFYMTSGKQPKQADVELLSRQSGLSGRQVERWFRRRRNQDRPSLLKKFREASWRFTFYLIAFIAGTAVIVDKPWFYDLRKVWEGYPIQSIIPSQYWYYMIELSFYWSLLFSIASDVKRKDFKEQIIHHVATIILISFSWFANYVRAGTLIMALHDSSDYLLESAKMFNYAGWKNTCNNIFIVFAIVFIITRLVILPFWILHCTLVYPLELYPAFFGYYFFNFMMGVLQLLHIFWAYLILRMAHKFITGKVVEDERSDREETESSEGEEAAAGGGAKNRPLANGHPILNNNHRKND.

Residues 1–40 are Lumenal-facing; sequence MLQTLHDYFWWERLWLPVNLTWADLEDRDGRVYAKASDLY. The N-linked (GlcNAc...) asparagine glycan is linked to Asn19. Residues 41–61 traverse the membrane as a helical segment; that stretch reads ITLPLALLFLIIRYFFELYVA. Positions 67-128 are homeobox-like; sequence LLNVKEKTRL…RRRRNQDRPS (62 aa). Positions 131–332 constitute a TLC domain; the sequence is KKFREASWRF…ILRMAHKFIT (202 aa). The next 4 membrane-spanning stretches (helical) occupy residues 140-160, 181-201, 209-229, and 264-284; these read FTFY…KPWF, WYYM…ASDV, QIIH…ANYV, and IFIV…PFWI. The Last loop motif signature appears at 291–300; sequence YPLELYPAFF. Residues 304 to 324 traverse the membrane as a helical segment; that stretch reads FFNFMMGVLQLLHIFWAYLIL. The Cytoplasmic segment spans residues 325–380; it reads RMAHKFITGKVVEDERSDREETESSEGEEAAAGGGAKNRPLANGHPILNNNHRKND. Residues 338-380 form a disordered region; it reads DERSDREETESSEGEEAAAGGGAKNRPLANGHPILNNNHRKND. The residue at position 341 (Ser341) is a Phosphoserine. The span at 344-353 shows a compositional bias: acidic residues; that stretch reads EETESSEGEE. Position 346 is a phosphothreonine (Thr346). 2 positions are modified to phosphoserine: Ser348 and Ser349.

As to quaternary structure, interacts with ATP6V0C, ASGR1, ASGR2 and SLC22A1/OCT1. Interacts with ELOV1, HSD17B12 and TECR. Interacts with NDUFS2. Post-translationally, acetylated. Deacetylation by SIRT3 increases enzyme activity and promotes mitochondrial ceramide accumulation. In terms of processing, phosphorylated at the C-terminus by CK2, leading to increase the ceramide synthase activity.

Its subcellular location is the endoplasmic reticulum membrane. The enzyme catalyses a very long-chain fatty acyl-CoA + a sphingoid base = an N-(very-long-chain fatty acyl)-sphingoid base + CoA + H(+). It carries out the reaction docosanoyl-CoA + sphinganine = N-docosanoylsphinganine + CoA + H(+). It catalyses the reaction tetracosanoyl-CoA + sphinganine = N-tetracosanoylsphinganine + CoA + H(+). The catalysed reaction is hexacosanoyl-CoA + sphinganine = N-hexacosanoylsphinganine + CoA + H(+). The enzyme catalyses (15Z)-tetracosenoyl-CoA + sphinganine = N-(15Z-tetracosenoyl)-sphinganine + CoA + H(+). It carries out the reaction 2-hydroxytetracosanoyl-CoA + sphinganine = N-(2-hydroxytetracosanoyl)-sphinganine + CoA + H(+). It catalyses the reaction 2-hydroxydocosanoyl-CoA + sphinganine = N-(2-hydroxydocosanoyl)-sphinganine + CoA + H(+). The catalysed reaction is 2-hydroxytetracosenoyl-CoA + sphinganine = N-(2-hydroxytetracosenoyl)-sphinganine + CoA + H(+). The enzyme catalyses tetracosenoyl-CoA + sphinganine = an N-tetracosenoylsphinganine + CoA + H(+). It carries out the reaction hexacosenoyl-CoA + sphinganine = N-hexacosenoylsphinganine + CoA + H(+). It catalyses the reaction tetracosanoyl-CoA + sphing-4-enine = N-tetracosanoyl-sphing-4-enine + CoA + H(+). The catalysed reaction is tetracosenoyl-CoA + sphing-4-enine = N-(tetracosenoyl)-sphing-4-enine + CoA + H(+). The enzyme catalyses heptadecasphing-4-enine + tetracosanoyl-CoA = N-tetracosanoyl-heptadecasphing-4-enine + CoA + H(+). It carries out the reaction a fatty acyl-CoA + sphing-4-enine = an N-acylsphing-4-enine + CoA + H(+). It catalyses the reaction sphing-4-enine + hexadecanoyl-CoA = N-hexadecanoylsphing-4-enine + CoA + H(+). The catalysed reaction is sphing-4-enine + octadecanoyl-CoA = N-octadecanoylsphing-4-enine + CoA + H(+). The enzyme catalyses eicosanoyl-CoA + sphing-4-enine = N-eicosanoyl-sphing-4-enine + CoA + H(+). It carries out the reaction sphinganine + hexadecanoyl-CoA = N-hexadecanoylsphinganine + CoA + H(+). It catalyses the reaction sphinganine + octadecanoyl-CoA = N-(octadecanoyl)-sphinganine + CoA + H(+). The catalysed reaction is sphinganine + (9Z)-octadecenoyl-CoA = N-(9Z-octadecenoyl)-sphinganine + CoA + H(+). The enzyme catalyses eicosanoyl-CoA + sphinganine = N-eicosanoylsphinganine + CoA + H(+). Its pathway is lipid metabolism; sphingolipid metabolism. With respect to regulation, ceramide synthase activity is inhibited by sphingosine-1-phosphate. Its function is as follows. Ceramide synthase that catalyzes the transfer of the acyl chain from acyl-CoA to a sphingoid base, with high selectivity toward very-long-chain fatty acyl-CoA (chain length C22-C27). N-acylates sphinganine and sphingosine bases to form dihydroceramides and ceramides in de novo synthesis and salvage pathways, respectively. Plays a non-redundant role in the synthesis of ceramides with very-long-chain fatty acids in kidney, liver and brain. Regulates the abundance of myelin-specific sphingolipids galactosylceramide and sulfatide that affects myelin sheath architecture and motor neuron functions. The sequence is that of Ceramide synthase 2 from Bos taurus (Bovine).